Here is a 348-residue protein sequence, read N- to C-terminus: MFSNKPVIGVVFGGKSSEHEVSIKSAKTIYNALSHLSNKERYVARPVYIDKYGYWHDYIFSESILYDKKDHLIFEDRRVNLTNLSNMEDIDVWFPCLHGPNGEDGVIQGLFKSTGKPFVGSGVLGSALGMDKIAMKSVFKSYNLPQVPYVSLNKADIQNNLYMKSIYEQINKIINYPCFIKPANLGSSVGITKAYSKEEFITGIEFAAKYDERIIVEKSIEGRELECGVLGKSIMKSSVVGEVKFQTDWYTYESKYNANLSSTIIPADLNIEISNKIQKLAIEACKAINAYGLARVDFFYQESTQQIYINEVNTLPGFTKTSMYPTLWEASGLKLEKLVASLIEIAKE.

In terms of domain architecture, ATP-grasp spans 136–344 (KSVFKSYNLP…LEKLVASLIE (209 aa)). Residue 171–226 (NKIINYPCFIKPANLGSSVGITKAYSKEEFITGIEFAAKYDERIIVEKSIEGRELE) participates in ATP binding. Residues Asp297, Glu311, and Asn313 each contribute to the Mg(2+) site.

The protein belongs to the D-alanine--D-alanine ligase family. It depends on Mg(2+) as a cofactor. Mn(2+) serves as cofactor.

It is found in the cytoplasm. The catalysed reaction is 2 D-alanine + ATP = D-alanyl-D-alanine + ADP + phosphate + H(+). It participates in cell wall biogenesis; peptidoglycan biosynthesis. Its function is as follows. Cell wall formation. In Prochlorococcus marinus (strain NATL1A), this protein is D-alanine--D-alanine ligase.